Consider the following 314-residue polypeptide: Probable UDP-sugar transporter protein SLC35A4 (314 aa).

Residues 1 to 20 (MIAISADESPESSSPALRLR) are Cytoplasmic-facing. Residues 21-41 (WLFLLLLLVLIYGSHAPLLSL) traverse the membrane as a helical segment. Residues 42–54 (CKTQAQIPFSASS) are Lumenal-facing. A helical membrane pass occupies residues 55–75 (CVLLIETSKLFISFASLLASG). The Cytoplasmic portion of the chain corresponds to 76 to 88 (SVSTLRISISMTT). A helical transmembrane segment spans residues 89 to 109 (ASPYAVPAVLYAFNNHLVVFM). The Lumenal portion of the chain corresponds to 110-145 (QAYMDPSSFQVLSNLKIASTALLYTSCLGKRLHRRQ). The helical transmembrane segment at 146-166 (WFAMGLLVSAGVSHSCFSYDL) threads the bilayer. The Cytoplasmic segment spans residues 167-175 (EGKRETAVY). A helical membrane pass occupies residues 176–196 (ITSWGLLLVLVYCFVSGLAAV). Residues 197-206 (YTERVLKSQR) are Lumenal-facing. A helical transmembrane segment spans residues 207–227 (LPLSMQNLFLYTFGVVVNLAS). Residues 228 to 242 (HLSGGEQKGFFEGYS) lie on the Cytoplasmic side of the membrane. A helical transmembrane segment spans residues 243 to 263 (AVVWVIVAGQVANGLLMSVVM). The Lumenal segment spans residues 264 to 267 (KHGT). A helical transmembrane segment spans residues 268–290 (GITRLFVISSAMLVNAVLSWGIL). At 291–314 (GVQLTGYFLFPVVLIGWAVYLYYT) the chain is on the cytoplasmic side.

Belongs to the nucleotide-sugar transporter family. SLC35A subfamily.

It localises to the golgi apparatus membrane. It catalyses the reaction CDP-L-ribitol(in) + CDP(out) = CDP-L-ribitol(out) + CDP(in). Mediates the transport of CDP-ribitol. Does not exhibit CMP-sialic acid, UDP-galactose and UDP-N-acetylglucosamine transport activity. The chain is Probable UDP-sugar transporter protein SLC35A4 from Danio rerio (Zebrafish).